Reading from the N-terminus, the 210-residue chain is Large ribosomal subunit protein uL3 (210 aa).

The segment at 119-143 is disordered; that stretch reads GYQGNIKKDGQSRGPMAHGSRYHRR.

It belongs to the universal ribosomal protein uL3 family. Part of the 50S ribosomal subunit. Forms a cluster with proteins L14 and L19.

One of the primary rRNA binding proteins, it binds directly near the 3'-end of the 23S rRNA, where it nucleates assembly of the 50S subunit. This Lacticaseibacillus casei (strain BL23) (Lactobacillus casei) protein is Large ribosomal subunit protein uL3.